We begin with the raw amino-acid sequence, 321 residues long: NADPH-dependent codeinone reductase 1-4 (321 aa).

Residues Thr27 and Asp51 each coordinate NADPH. Residues Tyr56 and His119 each act as proton donor in the active site. A substrate-binding site is contributed by His119. NADPH-binding residues include Ser165, Gln187, Ser214, Leu216, Ser264, and Arg269. A disordered region spans residues 299 to 321 (SADFLLSPTGPFKTEEEFWDEKD).

It belongs to the aldo/keto reductase family. As to expression, latex secreting cells (laticifer cells). Expressed constitutively in all organs with highest levels in capsules. Restricted to the parietal region of sieve elements adjacent or proximal to laticifers in roots, stems, leaves and carpels.

It is found in the cytoplasm. Its subcellular location is the cytosol. The enzyme catalyses codeine + NADP(+) = codeinone + NADPH + H(+). It catalyses the reaction neopine + NADP(+) = neopinone + NADPH + H(+). The catalysed reaction is morphine + NADP(+) = morphinone + NADPH + H(+). It carries out the reaction neomorphine + NADP(+) = neomorphinone + NADPH + H(+). Its pathway is alkaloid biosynthesis; morphine biosynthesis. NADPH-dependent codeinone reductase involved in biosynthesis of morphinan-type benzylisoquinoline and opiate alkaloids natural products. Reduces codeinone to codeine in the penultimate step in morphine biosynthesis. Can use morphinone, hydrocodone and hydromorphone as substrate during reductive reaction with NADPH as cofactor, and morphine and dihydrocodeine as substrate during oxidative reaction with NADP as cofactor. Converts morphinone to morphine, and neomorphinone to neomorphine. Reduces irreversibly neopinone, a spontaneous isomer of codeinone, to neopine; in planta, neopine levels are limited to low levels. This Papaver somniferum (Opium poppy) protein is NADPH-dependent codeinone reductase 1-4.